Reading from the N-terminus, the 343-residue chain is Thromboxane A2 receptor (343 aa).

Residues 1–29 (MWPNASSLGPCFRPMNITLEERRLIASPW) are Extracellular-facing. Asn-4 and Asn-16 each carry an N-linked (GlcNAc...) asparagine glycan. The chain crosses the membrane as a helical span at residues 30–52 (FAASFCLVGLASNLLALSVLMGA). Topologically, residues 53–66 (RQGSSQSRSSFLTF) are cytoplasmic. Residues 67 to 87 (LCGLVLTDFMGLLVTGAIVVT) form a helical membrane-spanning segment. Residues 88-106 (QHFVLFEWQAVDPGCSLCH) lie on the Extracellular side of the membrane. Cys-105 and Cys-183 form a disulfide bridge. Residues 107-128 (FMGVIMVFFGLCPLLLGAAMAS) traverse the membrane as a helical segment. At 129–149 (ERFLGITRPFSRPATASQRRA) the chain is on the cytoplasmic side. Residues 150–172 (WTTVGLVWASALALGLLPLLGVG) traverse the membrane as a helical segment. Topologically, residues 173 to 193 (HYTVQYPGSWCFLTLGTDPGD) are extracellular. A helical membrane pass occupies residues 194–219 (VAFGLLFALLGSISVGMSFLLNTISV). At 220–246 (ATLCHVYHGQATAQQRPRDCEVEMMVQ) the chain is on the cytoplasmic side. A helical membrane pass occupies residues 247–270 (LMGIMVVASICWMPLLVFIAQTVL). Residues 271 to 289 (QSPPAMSPTGQLSRLTERQ) are Extracellular-facing. A helical membrane pass occupies residues 290–311 (LLIYLRVATWNQILDPWVYILF). Residues 312–343 (RRAVIQRFYPRLSTRSRSLSLQPQLTRRSTIH) lie on the Cytoplasmic side of the membrane. Residues Ser-329 and Ser-331 each carry the phosphoserine modification.

Belongs to the G-protein coupled receptor 1 family. As to quaternary structure, interacts with RPGRIP1L. Interacts with RACK1; the interaction regulates TBXA2R cell surface expression.

It is found in the cell membrane. Functionally, receptor for thromboxane A2 (TXA2), a potent stimulator of platelet aggregation. The activity of this receptor is mediated by a G-protein that activates a phosphatidylinositol-calcium second messenger system. In the kidney, the binding of TXA2 to glomerular TP receptors causes intense vasoconstriction. Activates phospholipase C and adenylyl cyclase. The protein is Thromboxane A2 receptor (TBXA2R) of Bos taurus (Bovine).